The primary structure comprises 588 residues: MTLMIDENFKKQLAQRRERVEDLFYFENSKEIGRGTYGLVYKAVPKKQNGQFPNKEYALKMIEGQGFSMSACREIALFRELRHPNLICLQRVFLTNEKKVWLLLDYAEHDLWHVIKHHRTAKSKKVPIMVPRNMVKNILFQILSGMHYLHSNWVLHRDLKPANILLMGDGPPDMRGRVKIADLGFSRIYANPLKPMAELDPVVVTFWYRAPELLLGAKHYTKAIDVWAIGCIFAELLTAEPLFFCKEEDIKAQNPYHYDQVKRIFHLLGYPSDADWPDMKKMPDHQRLLSDARNEGTPIQTFPNSLHRYFDKWKINSQSSPYRLLVKLLTVDPTKRVSCEEAMNDIYFRKMERPPRETDDVFNKYPIPYAKKEQQMTVAPDQAQQQHQQQQVQMQQQPQMGQQQMMGQPQMVQPQMGQPPMGGAHPGVVAPDGHPHQMMQQQQHPQQHHMQYQGMHDPMQGGMDEGPQAKMMRMGNVPVGRYAPMPPPYGAPQDYHPQQGPPMVQMMQQPGPSGYYPQRPGQPTGAVPGPGPQGYMNPQMGMQMGMRAPGVPPQGYMPGRGMAPPQMGQQQPGPNQQQQQQWQQQYHR.

Residues 26-348 form the Protein kinase domain; sequence FENSKEIGRG…CEEAMNDIYF (323 aa). Residues 32-40 and Lys-60 contribute to the ATP site; that span reads IGRGTYGLV. Asp-158 acts as the Proton acceptor in catalysis. 3 disordered regions span residues 376 to 426, 510 to 529, and 546 to 588; these read MTVA…GAHP, PGPS…AVPG, and MRAP…QYHR. Low complexity predominate over residues 382–426; the sequence is QAQQQHQQQQVQMQQQPQMGQQQMMGQPQMVQPQMGQPPMGGAHP. Residues 557–588 show a composition bias toward low complexity; sequence MPGRGMAPPQMGQQQPGPNQQQQQQWQQQYHR.

Belongs to the protein kinase superfamily. CMGC Ser/Thr protein kinase family. CDC2/CDKX subfamily. As to quaternary structure, component of the Mediator complex. Mg(2+) is required as a cofactor.

It is found in the nucleus. It catalyses the reaction L-seryl-[protein] + ATP = O-phospho-L-seryl-[protein] + ADP + H(+). The catalysed reaction is L-threonyl-[protein] + ATP = O-phospho-L-threonyl-[protein] + ADP + H(+). It carries out the reaction [DNA-directed RNA polymerase] + ATP = phospho-[DNA-directed RNA polymerase] + ADP + H(+). Its function is as follows. Component of the Mediator complex, a coactivator involved in regulated gene transcription of nearly all RNA polymerase II-dependent genes. Mediator functions as a bridge to convey information from gene-specific regulatory proteins to the basal RNA polymerase II transcription machinery. Mediator is recruited to promoters by direct interactions with regulatory proteins and serves as a scaffold for the assembly of a functional pre-initiation complex with RNA polymerase II and the general transcription factors. Phosphorylates the CTD (C-terminal domain) of the large subunit of RNA polymerase II (RNAp II), which may inhibit the formation of a transcription initiation complex. This chain is Cyclin-dependent kinase 8 (cdk-8), found in Caenorhabditis elegans.